The chain runs to 102 residues: Small ribosomal subunit protein uS10 (102 aa).

Belongs to the universal ribosomal protein uS10 family. As to quaternary structure, part of the 30S ribosomal subunit.

Involved in the binding of tRNA to the ribosomes. The chain is Small ribosomal subunit protein uS10 from Latilactobacillus sakei subsp. sakei (strain 23K) (Lactobacillus sakei subsp. sakei).